Reading from the N-terminus, the 212-residue chain is RNA chaperone ProQ (212 aa).

Basic and acidic residues-rich tracts occupy residues 102 to 124 (ALKE…EKAK) and 132 to 144 (RKAD…DKPK). The segment at 102 to 149 (ALKESKERVFASRRTNTKEEKAKQPRRPAPRKADAAAKSDKPKAAPKA) is disordered.

The protein belongs to the ProQ family.

The protein resides in the cytoplasm. In terms of biological role, RNA chaperone with significant RNA binding, RNA strand exchange and RNA duplexing activities. The protein is RNA chaperone ProQ of Aeromonas hydrophila subsp. hydrophila (strain ATCC 7966 / DSM 30187 / BCRC 13018 / CCUG 14551 / JCM 1027 / KCTC 2358 / NCIMB 9240 / NCTC 8049).